The chain runs to 226 residues: MKQLEEFEKKLGYSFEDKKLLKEALTHKSYKSPVNNERLEFLGDAVLDLVVGEYLFKKFPKANEGELSKLRASLVNEEGFAKLAQKLDIGKYIFISQAEENNQGRTKPSLLSNAFEAVMGAIYLEKGLEKVRELSLKLLEEAYPKIDLDSLFKDFKTALQEFTQAHYGITPTYKLLGSSGPDHKKEFEVAVLLHEETISTAKGRSKKAAQQEAAKEALKILKARNE.

Residues 4–127 enclose the RNase III domain; that stretch reads LEEFEKKLGY…VMGAIYLEKG (124 aa). Residue E40 participates in Mg(2+) binding. The active site involves D44. Residues N113 and E116 each contribute to the Mg(2+) site. Residue E116 is part of the active site. Positions 154–223 constitute a DRBM domain; it reads DFKTALQEFT…AKEALKILKA (70 aa).

This sequence belongs to the ribonuclease III family. As to quaternary structure, homodimer. Mg(2+) is required as a cofactor.

It localises to the cytoplasm. It catalyses the reaction Endonucleolytic cleavage to 5'-phosphomonoester.. In terms of biological role, digests double-stranded RNA. Involved in the processing of primary rRNA transcript to yield the immediate precursors to the large and small rRNAs (23S and 16S). Processes some mRNAs, and tRNAs when they are encoded in the rRNA operon. Processes pre-crRNA and tracrRNA of type II CRISPR loci if present in the organism. This is Ribonuclease 3 from Nitratiruptor sp. (strain SB155-2).